The chain runs to 138 residues: Small ribosomal subunit protein uS11c (138 aa).

The protein belongs to the universal ribosomal protein uS11 family. In terms of assembly, part of the 30S ribosomal subunit.

The protein localises to the plastid. It localises to the chloroplast. The sequence is that of Small ribosomal subunit protein uS11c from Phaseolus vulgaris (Kidney bean).